A 270-amino-acid polypeptide reads, in one-letter code: 4-hydroxy-tetrahydrodipicolinate reductase (270 aa).

NAD(+) contacts are provided by residues G9–M14 and E35. R36 serves as a coordination point for NADP(+). Residues G99–T101 and A123–F126 each bind NAD(+). Residue H156 is the Proton donor/acceptor of the active site. Residue H157 participates in (S)-2,3,4,5-tetrahydrodipicolinate binding. K160 serves as the catalytic Proton donor. A (S)-2,3,4,5-tetrahydrodipicolinate-binding site is contributed by G166–T167.

This sequence belongs to the DapB family.

It is found in the cytoplasm. The catalysed reaction is (S)-2,3,4,5-tetrahydrodipicolinate + NAD(+) + H2O = (2S,4S)-4-hydroxy-2,3,4,5-tetrahydrodipicolinate + NADH + H(+). It catalyses the reaction (S)-2,3,4,5-tetrahydrodipicolinate + NADP(+) + H2O = (2S,4S)-4-hydroxy-2,3,4,5-tetrahydrodipicolinate + NADPH + H(+). It functions in the pathway amino-acid biosynthesis; L-lysine biosynthesis via DAP pathway; (S)-tetrahydrodipicolinate from L-aspartate: step 4/4. Functionally, catalyzes the conversion of 4-hydroxy-tetrahydrodipicolinate (HTPA) to tetrahydrodipicolinate. The protein is 4-hydroxy-tetrahydrodipicolinate reductase of Haemophilus influenzae (strain ATCC 51907 / DSM 11121 / KW20 / Rd).